The chain runs to 413 residues: Tyrosine--tRNA ligase (413 aa).

Positions 55–64 (PTRPDLHLGH) match the 'HIGH' region motif. The short motif at 242–246 (KMSKS) is the 'KMSKS' region element. Lys245 is a binding site for ATP. The 65-residue stretch at 346 to 410 (VKLSYILREC…GKKAFRRLVK (65 aa)) folds into the S4 RNA-binding domain.

The protein belongs to the class-I aminoacyl-tRNA synthetase family. TyrS type 2 subfamily. In terms of assembly, homodimer.

Its subcellular location is the cytoplasm. It catalyses the reaction tRNA(Tyr) + L-tyrosine + ATP = L-tyrosyl-tRNA(Tyr) + AMP + diphosphate + H(+). Catalyzes the attachment of tyrosine to tRNA(Tyr) in a two-step reaction: tyrosine is first activated by ATP to form Tyr-AMP and then transferred to the acceptor end of tRNA(Tyr). This chain is Tyrosine--tRNA ligase, found in Synechococcus sp. (strain JA-2-3B'a(2-13)) (Cyanobacteria bacterium Yellowstone B-Prime).